The following is a 500-amino-acid chain: Glycerol kinase (500 aa).

Residue threonine 13 participates in ADP binding. ATP contacts are provided by threonine 13, threonine 14, and serine 15. Threonine 13 contributes to the sn-glycerol 3-phosphate binding site. Residue arginine 17 participates in ADP binding. Sn-glycerol 3-phosphate-binding residues include arginine 83, glutamate 84, tyrosine 135, and aspartate 244. Positions 83, 84, 135, 244, and 245 each coordinate glycerol. ADP is bound by residues threonine 266 and glycine 309. 4 residues coordinate ATP: threonine 266, glycine 309, glutamine 313, and glycine 410. The ADP site is built by glycine 410 and asparagine 414.

It belongs to the FGGY kinase family.

It catalyses the reaction glycerol + ATP = sn-glycerol 3-phosphate + ADP + H(+). It functions in the pathway polyol metabolism; glycerol degradation via glycerol kinase pathway; sn-glycerol 3-phosphate from glycerol: step 1/1. Inhibited by fructose 1,6-bisphosphate (FBP). In terms of biological role, key enzyme in the regulation of glycerol uptake and metabolism. Catalyzes the phosphorylation of glycerol to yield sn-glycerol 3-phosphate. This Burkholderia ambifaria (strain MC40-6) protein is Glycerol kinase.